An 830-amino-acid chain; its full sequence is Pentatricopeptide repeat-containing protein At5g55740, chloroplastic (830 aa).

Residues 1–59 (MASLPFNTIPNKVPFSVSSKPSSKHHDEQAHSPSSTSYFHRVSSLCKNGEIKEALSLVT) constitute a chloroplast transit peptide. The disordered stretch occupies residues 15–36 (FSVSSKPSSKHHDEQAHSPSST). 19 PPR repeats span residues 69 to 103 (GPEI…GDFY), 106 to 136 (NEYI…LRVR), 137 to 171 (NVFS…EIFP), 172 to 206 (DNFV…GLED), 207 to 237 (CVFV…IPDR), 238 to 272 (NAVA…GVEP), 273 to 307 (TRVT…GMEL), 308 to 338 (DNIL…MFEK), 339 to 373 (DVVT…KLKY), 374 to 408 (DCVT…SFES), 409 to 439 (DIVL…TVEK), 440 to 474 (DLIL…GVPP), 475 to 509 (NVIT…GIIP), 510 to 544 (NLIS…GLRP), 545 to 575 (NAFS…IIRN), 581 to 611 (LVSI…KLYS), 612 to 646 (ELPL…GLKP), 647 to 682 (DNIT…SMKP), and 683 to 713 (CLEH…MPFK). Residues 718-793 (MIQSLVASCN…KPGCSWIQIT (76 aa)) are type E motif. A type E(+) motif region spans residues 796–826 (EGVHVFVANDKTHTRINEIQMMLALLLYDMG).

This sequence belongs to the PPR family. PCMP-E subfamily.

Its subcellular location is the plastid. The protein localises to the chloroplast. Plays a major role in chloroplast RNA editing. Acts as a site-recognition transacting factor involved in the edition of the site 2 of ndhD (ndhD-2), which encodes a subunit of the NDH complex. This Arabidopsis thaliana (Mouse-ear cress) protein is Pentatricopeptide repeat-containing protein At5g55740, chloroplastic (CRR21).